Reading from the N-terminus, the 729-residue chain is Solute carrier family 15 member 2 (729 aa).

Residues 1-34 (MNPFQKNESKETLFSPVSTEEMLPGPPSPPKKST) are disordered. The Cytoplasmic segment spans residues 1-57 (MNPFQKNESKETLFSPVSTEEMLPGPPSPPKKSTPKLFGSSYPLSIAFIVVNEFCER). Position 9 is a phosphoserine (Ser9). A Phosphothreonine modification is found at Thr12. Ser28 is subject to Phosphoserine. Residues 58 to 78 (FSYYGMKAVLTLYFLYFLHWN) traverse the membrane as a helical segment. At 79 to 87 (EDTSTSVYH) the chain is on the extracellular side. Residues 88 to 108 (AFSSLCYFTPILGAAIADSWL) form a helical membrane-spanning segment. Residues 109–113 (GKFKT) lie on the Cytoplasmic side of the membrane. A helical membrane pass occupies residues 114–134 (IIYLSLVYVLGHVFKSLGAIP). Residues 135–139 (ILGGK) are Extracellular-facing. A helical membrane pass occupies residues 140-160 (MLHTILSLVGLSLIALGTGGI). Residues 161–183 (KPCVAAFGGDQFEEEHAEARTRY) lie on the Cytoplasmic side of the membrane. Residues 184-204 (FSVFYLSINAGSLISTFITPM) traverse the membrane as a helical segment. Residues 205–217 (LRGDVKCFGEDCY) lie on the Extracellular side of the membrane. The helical transmembrane segment at 218–238 (ALAFGIPGLLMVLALVVFAMG) threads the bilayer. Over 239 to 295 (SKMYRKPPPEGNIVAQVTKCIWFAICNRFRNRSEDIPKRQHWLDWAAEKYPKHLIMD) the chain is Cytoplasmic. The chain crosses the membrane as a helical span at residues 296–316 (VKALTRILFLYIPLPMFWALL). Residues 317-343 (DQQGSRWTLQANKMDGDLGFFVLQPDQ) are Extracellular-facing. The chain crosses the membrane as a helical span at residues 344-364 (MQVLNPFLVLVFIPLFDLVIY). Residues 365–380 (RLISKCGVNFSSLRKM) lie on the Cytoplasmic side of the membrane. A helical transmembrane segment spans residues 381–401 (AVGMILACLAFAVAALVEIKI). The Extracellular portion of the chain corresponds to 402–611 (NGMIHPQPAS…PANKLSIAWQ (210 aa)). An extracellular domain (ECD) region spans residues 402 to 611 (NGMIHPQPAS…PANKLSIAWQ (210 aa)). 4 N-linked (GlcNAc...) asparagine glycosylation sites follow: Asn448, Asn472, Asn528, and Asn587. Residues 612–632 (LPQYVLVTAAEVMFSVTGLEF) form a helical membrane-spanning segment. Over 633–643 (SYSQAPSSMKS) the chain is Cytoplasmic. Residues 644 to 664 (VLQAAWLLTVAVGNIIVLIVA) form a helical membrane-spanning segment. The Extracellular portion of the chain corresponds to 665-674 (QFSGLVQWAE). The helical transmembrane segment at 675–695 (FVLFSCLLLVVCLIFSVMGYY) threads the bilayer. At 696–729 (YVPLKSEGIHEATEKQIPHIQGNMINLETKNTRL) the chain is on the cytoplasmic side.

It belongs to the major facilitator superfamily. Proton-dependent oligopeptide transporter (POT/PTR) (TC 2.A.17) family. In terms of assembly, interacts (via extracellular domain region) with trypsin. As to expression, expressed in kidney brush border cells (at protein level). Highly expressed in macrophages.

The protein localises to the apical cell membrane. Its subcellular location is the cytoplasmic vesicle. The protein resides in the phagosome membrane. It is found in the cell membrane. It catalyses the reaction N-acetyl-D-muramoyl-L-alanyl-D-isoglutamine(out) + 3 H(+)(out) = N-acetyl-D-muramoyl-L-alanyl-D-isoglutamine(in) + 3 H(+)(in). The catalysed reaction is a dipeptide(out) + 2 H(+)(out) = a dipeptide(in) + 2 H(+)(in). It carries out the reaction glycyl-L-leucine(out) + 2 H(+)(out) = glycyl-L-leucine(in) + 2 H(+)(in). The enzyme catalyses glycyl-L-lysine(out) + 2 H(+)(out) = glycyl-L-lysine(in) + 2 H(+)(in). It catalyses the reaction glycyl-L-glutamate(out) + 3 H(+)(out) = glycyl-L-glutamate(in) + 3 H(+)(in). The catalysed reaction is L-alanyl-L-alanine(out) + 2 H(+)(out) = L-alanyl-L-alanine(in) + 2 H(+)(in). It carries out the reaction an L-amino acid tripeptide(out) + 2 H(+)(out) = an L-amino acid tripeptide(in) + 2 H(+)(in). The enzyme catalyses carnosine(out) + 2 H(+)(out) = carnosine(in) + 2 H(+)(in). Functionally, proton-coupled amino-acid transporter that transports oligopeptides of 2 to 4 amino acids with a preference for dipeptides. Transports neutral and anionic dipeptides with a proton to peptide stoichiometry of 2:1 or 3:1. In kidney, involved in the absorption of circulating di- and tripeptides from the glomerular filtrate. Can also transport beta-lactam antibiotics, such as the aminocephalosporin cefadroxil, and other antiviral and anticancer drugs. Transports the dipeptide-like aminopeptidase inhibitor bestatin. Also able to transport carnosine. Involved in innate immunity by promoting the detection of microbial pathogens by NOD-like receptors (NLRs). Mediates transport of bacterial peptidoglycans across the plasma membrane or, in macrophages, the phagosome membrane: catalyzes the transport of certain bacterial peptidoglycans, such as muramyl dipeptide (MDP), the NOD2 ligand. This is Solute carrier family 15 member 2 from Mus musculus (Mouse).